A 482-amino-acid polypeptide reads, in one-letter code: tRNA sulfurtransferase (482 aa).

The THUMP domain maps to 61 to 165; that stretch reads LAIRDALTRI…DDRLLLIKGR (105 aa). ATP-binding positions include 183-184, K265, G287, and Q296; that span reads LI. Cysteines 344 and 456 form a disulfide. The Rhodanese domain occupies 404–482; the sequence is FGPNDVILDI…GFENVKAYRP (79 aa). C456 (cysteine persulfide intermediate) is an active-site residue.

It belongs to the ThiI family.

The protein resides in the cytoplasm. It catalyses the reaction [ThiI sulfur-carrier protein]-S-sulfanyl-L-cysteine + a uridine in tRNA + 2 reduced [2Fe-2S]-[ferredoxin] + ATP + H(+) = [ThiI sulfur-carrier protein]-L-cysteine + a 4-thiouridine in tRNA + 2 oxidized [2Fe-2S]-[ferredoxin] + AMP + diphosphate. It carries out the reaction [ThiS sulfur-carrier protein]-C-terminal Gly-Gly-AMP + S-sulfanyl-L-cysteinyl-[cysteine desulfurase] + AH2 = [ThiS sulfur-carrier protein]-C-terminal-Gly-aminoethanethioate + L-cysteinyl-[cysteine desulfurase] + A + AMP + 2 H(+). It participates in cofactor biosynthesis; thiamine diphosphate biosynthesis. In terms of biological role, catalyzes the ATP-dependent transfer of a sulfur to tRNA to produce 4-thiouridine in position 8 of tRNAs, which functions as a near-UV photosensor. Also catalyzes the transfer of sulfur to the sulfur carrier protein ThiS, forming ThiS-thiocarboxylate. This is a step in the synthesis of thiazole, in the thiamine biosynthesis pathway. The sulfur is donated as persulfide by IscS. This is tRNA sulfurtransferase from Salmonella gallinarum (strain 287/91 / NCTC 13346).